The sequence spans 220 residues: Artemin (220 aa).

The first 39 residues, 1 to 39, serve as a signal peptide directing secretion; it reads MELGLGGLSTLSHCPWPRQQPALWPTLAALALLSSVAEA. Positions 40 to 107 are excised as a propeptide; it reads SLGSAPRSPA…ALPRGGRAAR (68 aa). Residues 41–121 form a disordered region; it reads LGSAPRSPAP…GSRARAAGAR (81 aa). Pro residues-rich tracts occupy residues 47–58 and 81–98; these read SPAPREGPPPVL and PPPQ…PPSA. Positions 99–121 are enriched in low complexity; sequence LPRGGRAARAGGPGSRARAAGAR. 3 disulfides stabilise this stretch: cysteine 123–cysteine 188, cysteine 150–cysteine 216, and cysteine 154–cysteine 218. A glycan (N-linked (GlcNAc...) asparagine) is linked at asparagine 202.

It belongs to the TGF-beta family. GDNF subfamily. Homodimer; disulfide-linked. Interacts with GFRA3 coreceptor and RET: forms a 2:2:2 ternary complex composed of ARTN ligand, GFRA3 and RET receptor. In terms of tissue distribution, ubiquitous. Expressed at high levels in peripheral tissues including prostate, placenta, pancreas, heart, kidney, pituitary gland, lung and testis. Expressed at low levels in the brain.

The protein localises to the secreted. Growth factor that supports the survival of sensory and sympathetic peripheral neurons in culture and also supports the survival of dopaminergic neurons of the ventral mid-brain. Acts by binding to its coreceptor, GFRA3, leading to autophosphorylation and activation of the RET receptor. Strong attractant of gut hematopoietic cells thus promoting the formation Peyer's patch-like structures, a major component of the gut-associated lymphoid tissue. The protein is Artemin of Homo sapiens (Human).